Reading from the N-terminus, the 306-residue chain is Embryogenic cell protein 40 (306 aa).

Disordered stretches follow at residues 1 to 57 (MADL…ASHG), 80 to 171 (AATH…GGLG), and 188 to 306 (GTGI…PTSH). The span at 12-23 (IQLTDQHGNPVQ) shows a compositional bias: polar residues. Positions 32–44 (VHITGVATTGATT) are enriched in low complexity. Gly residues-rich tracts occupy residues 85–119 (GSHGGTGTHGVGPTGVGAAHGGTGTTTGLGTGTGT), 127–151 (GPTGIGGTHGVGSTGIGGAHGGTGV), and 159–171 (GPTGTGAAHGGLG). A compositionally biased stretch (low complexity) spans 194-204 (GSAPASAGSHS). 2 stretches are compositionally biased toward basic and acidic residues: residues 205–218 (HAPEKKTALGEQLH) and 243–259 (KIKEKLGGGKHKKDEHT). Residues 260-278 (TVATTKTTTAAHPGGAAVA) show a composition bias toward low complexity. Positions 279-298 (VEHHEHEKKSMLDKIKDKLP) are enriched in basic and acidic residues.

The protein belongs to the plant dehydrin family.

The protein is Embryogenic cell protein 40 (ECP40) of Daucus carota (Wild carrot).